The primary structure comprises 470 residues: Siroheme synthase (470 aa).

A precorrin-2 dehydrogenase /sirohydrochlorin ferrochelatase region spans residues Met1–Met203. Residues Glu22–Val23 and Pro43–Glu44 each bind NAD(+). Residue Ser128 is modified to Phosphoserine. Residues Gly216–Asp470 form a uroporphyrinogen-III C-methyltransferase region. An S-adenosyl-L-methionine-binding site is contributed by Pro225. The active-site Proton acceptor is the Asp248. The active-site Proton donor is the Lys270. Residues Gly301–Asp303, Met383, and Ala412 contribute to the S-adenosyl-L-methionine site.

The protein in the N-terminal section; belongs to the precorrin-2 dehydrogenase / sirohydrochlorin ferrochelatase family. In the C-terminal section; belongs to the precorrin methyltransferase family.

It catalyses the reaction uroporphyrinogen III + 2 S-adenosyl-L-methionine = precorrin-2 + 2 S-adenosyl-L-homocysteine + H(+). The catalysed reaction is precorrin-2 + NAD(+) = sirohydrochlorin + NADH + 2 H(+). The enzyme catalyses siroheme + 2 H(+) = sirohydrochlorin + Fe(2+). It functions in the pathway cofactor biosynthesis; adenosylcobalamin biosynthesis; precorrin-2 from uroporphyrinogen III: step 1/1. The protein operates within cofactor biosynthesis; adenosylcobalamin biosynthesis; sirohydrochlorin from precorrin-2: step 1/1. Its pathway is porphyrin-containing compound metabolism; siroheme biosynthesis; precorrin-2 from uroporphyrinogen III: step 1/1. It participates in porphyrin-containing compound metabolism; siroheme biosynthesis; siroheme from sirohydrochlorin: step 1/1. It functions in the pathway porphyrin-containing compound metabolism; siroheme biosynthesis; sirohydrochlorin from precorrin-2: step 1/1. Functionally, multifunctional enzyme that catalyzes the SAM-dependent methylations of uroporphyrinogen III at position C-2 and C-7 to form precorrin-2 via precorrin-1. Then it catalyzes the NAD-dependent ring dehydrogenation of precorrin-2 to yield sirohydrochlorin. Finally, it catalyzes the ferrochelation of sirohydrochlorin to yield siroheme. The protein is Siroheme synthase of Chromobacterium violaceum (strain ATCC 12472 / DSM 30191 / JCM 1249 / CCUG 213 / NBRC 12614 / NCIMB 9131 / NCTC 9757 / MK).